We begin with the raw amino-acid sequence, 700 residues long: Glutamine synthetase (700 aa).

One can recognise a GS beta-grasp domain in the interval 65 to 155; sequence YHFTPPGSSP…LPTAFCSYGG (91 aa). The 431-residue stretch at 159-589 folds into the GS catalytic domain; the sequence is DRDSLLRSME…TMQEMIRKDL (431 aa). Residues Glu196, Glu198, Glu267, and Glu274 each contribute to the Mg(2+) site. L-glutamate-binding positions include 318–319 and Gly319; that span reads NG. His323 is a Mg(2+) binding site. The ATP site is built by Ser327 and Arg435. Position 435 (Arg435) interacts with L-glutamate. Glu472 provides a ligand contact to Mg(2+).

The protein belongs to the glutamine synthetase family. In terms of assembly, homohexamer. Mg(2+) is required as a cofactor.

It is found in the cytoplasm. The catalysed reaction is L-glutamate + NH4(+) + ATP = L-glutamine + ADP + phosphate + H(+). The activity of this enzyme is not controlled by adenylation. Catalyzes the ATP-dependent biosynthesis of glutamine from glutamate and ammonia. This Butyrivibrio fibrisolvens protein is Glutamine synthetase.